Consider the following 481-residue polypeptide: Protein nucleotidyltransferase YdiU (481 aa).

ATP contacts are provided by G85, G87, R88, K108, D120, G121, R172, and R179. D248 (proton acceptor) is an active-site residue. Mg(2+) contacts are provided by N249 and D258. An ATP-binding site is contributed by D258.

It belongs to the SELO family. It depends on Mg(2+) as a cofactor. Mn(2+) serves as cofactor.

It carries out the reaction L-seryl-[protein] + ATP = 3-O-(5'-adenylyl)-L-seryl-[protein] + diphosphate. The enzyme catalyses L-threonyl-[protein] + ATP = 3-O-(5'-adenylyl)-L-threonyl-[protein] + diphosphate. The catalysed reaction is L-tyrosyl-[protein] + ATP = O-(5'-adenylyl)-L-tyrosyl-[protein] + diphosphate. It catalyses the reaction L-histidyl-[protein] + UTP = N(tele)-(5'-uridylyl)-L-histidyl-[protein] + diphosphate. It carries out the reaction L-seryl-[protein] + UTP = O-(5'-uridylyl)-L-seryl-[protein] + diphosphate. The enzyme catalyses L-tyrosyl-[protein] + UTP = O-(5'-uridylyl)-L-tyrosyl-[protein] + diphosphate. In terms of biological role, nucleotidyltransferase involved in the post-translational modification of proteins. It can catalyze the addition of adenosine monophosphate (AMP) or uridine monophosphate (UMP) to a protein, resulting in modifications known as AMPylation and UMPylation. This Cereibacter sphaeroides (strain ATCC 17023 / DSM 158 / JCM 6121 / CCUG 31486 / LMG 2827 / NBRC 12203 / NCIMB 8253 / ATH 2.4.1.) (Rhodobacter sphaeroides) protein is Protein nucleotidyltransferase YdiU.